The primary structure comprises 206 residues: Alpha-amylase/trypsin inhibitor (206 aa).

Disulfide bonds link Cys-9–Cys-205, Cys-51–Cys-61, Cys-66–Cys-72, Cys-118–Cys-194, Cys-124–Cys-177, Cys-132–Cys-142, Cys-146–Cys-155, and Cys-156–Cys-164.

This sequence belongs to the thaumatin family.

Inhibits both trypsin and alpha-amylase. Inhibits the growth of some plant fungal pathogens. The polypeptide is Alpha-amylase/trypsin inhibitor (Zea mays (Maize)).